The primary structure comprises 532 residues: Fatty-acid amide hydrolase 2 (532 aa).

The helical transmembrane segment at 11 to 31 threads the bilayer; that stretch reads LFLLRALGFLIGLVGRAALVL. Active-site charge relay system residues include lysine 131 and serine 206. Residue serine 230 is the Acyl-ester intermediate of the active site.

This sequence belongs to the amidase family. In terms of assembly, homodimer. In terms of tissue distribution, expressed in kidney, liver, lung, prostate, heart and ovary.

The protein resides in the membrane. Its subcellular location is the lipid droplet. The catalysed reaction is N-(5Z,8Z,11Z,14Z-eicosatetraenoyl)-ethanolamine + H2O = ethanolamine + (5Z,8Z,11Z,14Z)-eicosatetraenoate. It catalyses the reaction (9Z)-octadecenamide + H2O = (9Z)-octadecenoate + NH4(+). The enzyme catalyses N-(9Z-octadecenoyl) ethanolamine + H2O = ethanolamine + (9Z)-octadecenoate. It carries out the reaction N-hexadecanoylethanolamine + H2O = ethanolamine + hexadecanoate. Its activity is regulated as follows. Inhibited by O-aryl carbamates and alpha-keto heterocytes. In terms of biological role, catalyzes the hydrolysis of endogenous amidated lipids like the sleep-inducing lipid oleamide ((9Z)-octadecenamide), the endocannabinoid anandamide (N-(5Z,8Z,11Z,14Z-eicosatetraenoyl)-ethanolamine), as well as other fatty amides, to their corresponding fatty acids, thereby regulating the signaling functions of these molecules. Hydrolyzes monounsaturated substrate anandamide preferentially as compared to polyunsaturated substrates. The polypeptide is Fatty-acid amide hydrolase 2 (FAAH2) (Homo sapiens (Human)).